The chain runs to 201 residues: ATP synthase subunit delta, chloroplastic (201 aa).

The protein belongs to the ATPase delta chain family. In terms of assembly, F-type ATPases have 2 components, F(1) - the catalytic core - and F(0) - the membrane proton channel. F(1) has five subunits: alpha(3), beta(3), gamma(1), delta(1), epsilon(1). CF(0) has four main subunits: a(1), b(1), b'(1) and c(10-14). The alpha and beta chains form an alternating ring which encloses part of the gamma chain. F(1) is attached to F(0) by a central stalk formed by the gamma and epsilon chains, while a peripheral stalk is formed by the delta, b and b' chains.

It localises to the plastid. Its subcellular location is the chloroplast thylakoid membrane. In terms of biological role, f(1)F(0) ATP synthase produces ATP from ADP in the presence of a proton or sodium gradient. F-type ATPases consist of two structural domains, F(1) containing the extramembraneous catalytic core and F(0) containing the membrane proton channel, linked together by a central stalk and a peripheral stalk. During catalysis, ATP synthesis in the catalytic domain of F(1) is coupled via a rotary mechanism of the central stalk subunits to proton translocation. Functionally, this protein is part of the stalk that links CF(0) to CF(1). It either transmits conformational changes from CF(0) to CF(1) or is implicated in proton conduction. The chain is ATP synthase subunit delta, chloroplastic from Vaucheria litorea (Yellow-green alga).